Here is a 122-residue protein sequence, read N- to C-terminus: Large ribosomal subunit protein bL12 (122 aa).

This sequence belongs to the bacterial ribosomal protein bL12 family. Homodimer. Part of the ribosomal stalk of the 50S ribosomal subunit. Forms a multimeric L10(L12)X complex, where L10 forms an elongated spine to which 2 to 4 L12 dimers bind in a sequential fashion. Binds GTP-bound translation factors.

Functionally, forms part of the ribosomal stalk which helps the ribosome interact with GTP-bound translation factors. Is thus essential for accurate translation. The sequence is that of Large ribosomal subunit protein bL12 from Levilactobacillus brevis (strain ATCC 367 / BCRC 12310 / CIP 105137 / JCM 1170 / LMG 11437 / NCIMB 947 / NCTC 947) (Lactobacillus brevis).